The chain runs to 148 residues: Flavodoxin (148 aa).

One can recognise a Flavodoxin-like domain in the interval alanine 4–arginine 145.

Belongs to the flavodoxin family. The cofactor is FMN.

Functionally, low-potential electron donor to a number of redox enzymes. The chain is Flavodoxin from Nitratidesulfovibrio vulgaris (strain ATCC 29579 / DSM 644 / CCUG 34227 / NCIMB 8303 / VKM B-1760 / Hildenborough) (Desulfovibrio vulgaris).